A 617-amino-acid polypeptide reads, in one-letter code: Kelch-like protein diablo (617 aa).

Residues 1–55 are disordered; sequence MGDPLLPGSTGLGSGGTAAATGGTGTTGTGLGSGGTSGTERPPSPARLTHTSEKH. The span at 10–37 shows a compositional bias: gly residues; that stretch reads TGLGSGGTAAATGGTGTTGTGLGSGGTS. Residues 73–140 form the BTB domain; it reads CDVVLNVGGR…CYTAHIIVEE (68 aa). Residues 175 to 277 form the BACK domain; that stretch reads CLGIRAFADT…SPKFLVGTVG (103 aa). Kelch repeat units follow at residues 324–370, 372–418, 419–465, 467–512, 514–559, and 560–606; these read VLFA…VLND, LYAV…VLDG, FLYA…VLSG, LYAI…VFNN, IYAV…VVNG, and QLYA…VMRA.

It participates in protein modification; protein ubiquitination. Functionally, probable substrate-specific adapter of an E3 ubiquitin-protein ligase complex which mediates the ubiquitination and subsequent proteasomal degradation of target proteins. May have a role in synapse differentiation and growth. The chain is Kelch-like protein diablo from Drosophila mojavensis (Fruit fly).